We begin with the raw amino-acid sequence, 87 residues long: Acyl-CoA-binding protein (87 aa).

Position 2 is an N-acetylserine (Ser-2). Residues 2–87 (SQAEFDKAAE…VEELKKKYGI (86 aa)) enclose the ACB domain. At Lys-8 the chain carries N6-acetyllysine; alternate. Lys-8 carries the post-translational modification N6-succinyllysine; alternate. Lys-14 is an an acyl-CoA binding site. An N6-succinyllysine modification is found at Lys-17. An N6-acetyllysine modification is found at Lys-19. The residue at position 29 (Tyr-29) is a Phosphotyrosine. Residues 29–33 (YSHYK), Lys-51, Lys-55, and Tyr-74 each bind an acyl-CoA. Position 51 is an N6-acetyllysine (Lys-51). The residue at position 55 (Lys-55) is an N6-acetyllysine; alternate. Lys-55 carries the post-translational modification N6-succinyllysine; alternate. Lys-55 carries the N6-(2-hydroxyisobutyryl)lysine; alternate modification. Lys-55 is subject to N6-malonyllysine; alternate. The residue at position 77 (Lys-77) is an N6-acetyllysine; alternate. Position 77 is an N6-succinyllysine; alternate (Lys-77).

Belongs to the ACBP family. In terms of assembly, monomer.

Its subcellular location is the endoplasmic reticulum. The protein localises to the golgi apparatus. Its function is as follows. Binds medium- and long-chain acyl-CoA esters with very high affinity and may function as an intracellular carrier of acyl-CoA esters. It is also able to displace diazepam from the benzodiazepine (BZD) recognition site located on the GABA type A receptor. It is therefore possible that this protein also acts as a neuropeptide to modulate the action of the GABA receptor. This Bos taurus (Bovine) protein is Acyl-CoA-binding protein (DBI).